Here is a 434-residue protein sequence, read N- to C-terminus: Cysteine proteinase 6 (434 aa).

A signal peptide spans 1-19 (MKVLSALCVLLVSVATAKQ). A propeptide spans 20 to 113 (QLSELQYRNA…SEKVFGGVQA (94 aa)) (activation peptide). Intrachain disulfides connect C133–C178 and C169–C211. C136 is a catalytic residue. Residue N227 is glycosylated (N-linked (GlcNAc...) asparagine). Residues C269 and C416 are joined by a disulfide bond. Residue H276 is part of the active site. The disordered stretch occupies residues 285–384 (SGSSGSQSQS…GGNSNSGDYP (100 aa)). The segment covering 288–347 (SGSQSQSAGSQSQSSNNNWSESSQSQDSNSWSQSSQSQSSQDSNSWSQSSQSQGSNSFTG) has biased composition (low complexity). N-linked (GlcNAc...) asparagine glycosylation occurs at N305. Positions 348-358 (AGTGSGSGSVS) are enriched in gly residues. A compositionally biased stretch (low complexity) spans 359-381 (GSGSASGSSSFSGSSNGGNSNSG). N394 is a catalytic residue.

It belongs to the peptidase C1 family.

It localises to the lysosome. This is Cysteine proteinase 6 (cprF) from Dictyostelium discoideum (Social amoeba).